The chain runs to 256 residues: 5'-nucleotidase SurE (256 aa).

Residues Asp-8, Asp-9, Ser-40, and Asn-92 each contribute to the a divalent metal cation site.

The protein belongs to the SurE nucleotidase family. A divalent metal cation is required as a cofactor.

The protein resides in the cytoplasm. The catalysed reaction is a ribonucleoside 5'-phosphate + H2O = a ribonucleoside + phosphate. Its function is as follows. Nucleotidase that shows phosphatase activity on nucleoside 5'-monophosphates. This is 5'-nucleotidase SurE from Allorhizobium ampelinum (strain ATCC BAA-846 / DSM 112012 / S4) (Agrobacterium vitis (strain S4)).